Here is a 923-residue protein sequence, read N- to C-terminus: Glucosidase 2 subunit alpha (923 aa).

The first 25 residues, methionine 1 to glycine 25, serve as a signal peptide directing secretion. An N-linked (GlcNAc...) asparagine glycan is attached at asparagine 262. Residue aspartate 524 is the Nucleophile of the active site. Residue glutamate 527 is part of the active site. Asparagine 563 is a glycosylation site (N-linked (GlcNAc...) asparagine). Aspartate 600 serves as the catalytic Proton donor. Asparagine 822 carries an N-linked (GlcNAc...) asparagine glycan.

It belongs to the glycosyl hydrolase 31 family. Heterodimer of a catalytic subunit alpha (gls2) and a subunit beta (gtb1).

It localises to the endoplasmic reticulum. It carries out the reaction N(4)-(alpha-D-Glc-(1-&gt;3)-alpha-D-Man-(1-&gt;2)-alpha-D-Man-(1-&gt;2)-alpha-D-Man-(1-&gt;3)-[alpha-D-Man-(1-&gt;2)-alpha-D-Man-(1-&gt;3)-[alpha-D-Man-(1-&gt;2)-alpha-D-Man-(1-&gt;6)]-alpha-D-Man-(1-&gt;6)]-beta-D-Man-(1-&gt;4)-beta-D-GlcNAc-(1-&gt;4)-beta-D-GlcNAc)-L-asparaginyl-[protein] + H2O = N(4)-(alpha-D-Man-(1-&gt;2)-alpha-D-Man-(1-&gt;2)-alpha-D-Man-(1-&gt;3)-[alpha-D-Man-(1-&gt;2)-alpha-D-Man-(1-&gt;3)-[alpha-D-Man-(1-&gt;2)-alpha-D-Man-(1-&gt;6)]-alpha-D-Man-(1-&gt;6)]-beta-D-Man-(1-&gt;4)-beta-D-GlcNAc-(1-&gt;4)-beta-D-GlcNAc)-L-asparaginyl-[protein] (N-glucan mannose isomer 9A1,2,3B1,2,3) + beta-D-glucose. The catalysed reaction is N(4)-(alpha-D-Glc-(1-&gt;3)-alpha-D-Glc-(1-&gt;3)-alpha-D-Man-(1-&gt;2)-alpha-D-Man-(1-&gt;2)-alpha-D-Man-(1-&gt;3)-[alpha-D-Man-(1-&gt;2)-alpha-D-Man-(1-&gt;3)-[alpha-D-Man-(1-&gt;2)-alpha-D-Man-(1-&gt;6)]-alpha-D-Man-(1-&gt;6)]-beta-D-Man-(1-&gt;4)-beta-D-GlcNAc-(1-&gt;4)-beta-D-GlcNAc)-L-asparaginyl-[protein] + H2O = N(4)-(alpha-D-Glc-(1-&gt;3)-alpha-D-Man-(1-&gt;2)-alpha-D-Man-(1-&gt;2)-alpha-D-Man-(1-&gt;3)-[alpha-D-Man-(1-&gt;2)-alpha-D-Man-(1-&gt;3)-[alpha-D-Man-(1-&gt;2)-alpha-D-Man-(1-&gt;6)]-alpha-D-Man-(1-&gt;6)]-beta-D-Man-(1-&gt;4)-beta-D-GlcNAc-(1-&gt;4)-beta-D-GlcNAc)-L-asparaginyl-[protein] + beta-D-glucose. It participates in glycan metabolism; N-glycan metabolism. In terms of biological role, catalytic subunit of glucosidase 2, which cleaves sequentially the 2 innermost alpha-1,3-linked glucose residues from the Glc(2)Man(9)GlcNAc(2) oligosaccharide precursor of immature glycoproteins. In Schizosaccharomyces pombe (strain 972 / ATCC 24843) (Fission yeast), this protein is Glucosidase 2 subunit alpha.